The chain runs to 449 residues: UDP-N-acetylmuramoyl-tripeptide--D-alanyl-D-alanine ligase (449 aa).

106–112 (GSVGKTS) serves as a coordination point for ATP.

The protein belongs to the MurCDEF family. MurF subfamily.

The protein resides in the cytoplasm. The enzyme catalyses D-alanyl-D-alanine + UDP-N-acetyl-alpha-D-muramoyl-L-alanyl-gamma-D-glutamyl-meso-2,6-diaminopimelate + ATP = UDP-N-acetyl-alpha-D-muramoyl-L-alanyl-gamma-D-glutamyl-meso-2,6-diaminopimeloyl-D-alanyl-D-alanine + ADP + phosphate + H(+). It participates in cell wall biogenesis; peptidoglycan biosynthesis. Its function is as follows. Involved in cell wall formation. Catalyzes the final step in the synthesis of UDP-N-acetylmuramoyl-pentapeptide, the precursor of murein. This is UDP-N-acetylmuramoyl-tripeptide--D-alanyl-D-alanine ligase from Rickettsia prowazekii (strain Madrid E).